The sequence spans 334 residues: Sucrose operon repressor (334 aa).

The 58-residue stretch at 6–63 (VTIKDIAELAGVSKATASLVLNGRGKELRVAQETRERVLAIAREQHYQPSIHARSLRD) folds into the HTH lacI-type domain. The H-T-H motif DNA-binding region spans 8 to 27 (IKDIAELAGVSKATASLVLN).

In terms of biological role, repressor for the scr operon. Binds D-fructose as an inducer. In Klebsiella pneumoniae, this protein is Sucrose operon repressor (scrR).